Consider the following 460-residue polypeptide: UDP-glycosyltransferase 91C1 (460 aa).

UDP-alpha-D-glucose is bound by residues threonine 283, 335-337 (VPQ), 352-360 (HCGWNSVVE), and 374-377 (LNEQ).

Belongs to the UDP-glycosyltransferase family.

The protein is UDP-glycosyltransferase 91C1 (UGT91C1) of Arabidopsis thaliana (Mouse-ear cress).